Here is a 304-residue protein sequence, read N- to C-terminus: Rhodopsin (304 aa).

Topologically, residues 1 to 13 are extracellular; it reads YEYPQYYLVNPAA. Residues 14 to 38 traverse the membrane as a helical segment; it reads YAALGAYMFLLILVGFPINFLTLYV. The Cytoplasmic portion of the chain corresponds to 39 to 50; sequence TIEHKKLRTPLN. A helical membrane pass occupies residues 51–73; that stretch reads YILLNLAVANLFMVFGGFTTTMF. Residues 74–87 lie on the Extracellular side of the membrane; the sequence is TSIRGYFVLGHLGC. A disulfide bond links Cys-87 and Cys-164. Residues 88–110 traverse the membrane as a helical segment; the sequence is NLEGFFATLSGEIALWSLVVLAI. Residues 111-113 carry the 'Ionic lock' involved in activated form stabilization motif; it reads ERW. The Cytoplasmic segment spans residues 111 to 129; it reads ERWVVVCKPISNFRFGENH. A helical transmembrane segment spans residues 130–150; that stretch reads AIMGLAFTWTMAMACAAPPLV. Over 151–179 the chain is Extracellular; it reads GWSRYIPEGMQCSCGIDYYTRAEGFNNES. A glycan (N-linked (GlcNAc...) asparagine) is linked at Asn-177. Residues 180 to 201 form a helical membrane-spanning segment; that stretch reads FVVYMFTCHFMTPLTIVFFCYG. At 202–229 the chain is on the cytoplasmic side; that stretch reads RLLCAVKEAAAAQQESETTQRAEREVTR. A helical membrane pass occupies residues 230–251; that stretch reads MVVIMVIAFLICWCPYAGVAWF. The Extracellular portion of the chain corresponds to 252–263; the sequence is IFTHQGSEFGPV. A helical transmembrane segment spans residues 264–285; that stretch reads FMTIPAFFAKSSSIYNPMIYIC. At Lys-273 the chain carries N6-(retinylidene)lysine. The Cytoplasmic segment spans residues 286-304; that stretch reads LNKQFRHCMITTLCCGKKA. Residues Cys-299 and Cys-300 are each lipidated (S-palmitoyl cysteine).

This sequence belongs to the G-protein coupled receptor 1 family. Opsin subfamily. Post-translationally, phosphorylated on some or all of the serine and threonine residues present in the C-terminal region. In terms of processing, contains one covalently linked retinal chromophore.

The protein resides in the membrane. The protein localises to the cell projection. It is found in the cilium. Its subcellular location is the photoreceptor outer segment. Functionally, photoreceptor required for image-forming vision at low light intensity. While most salt water fish species use retinal as chromophore, most freshwater fish use 3-dehydroretinal, or a mixture of retinal and 3-dehydroretinal. Light-induced isomerization of 11-cis to all-trans retinal triggers a conformational change that activates signaling via G-proteins. Subsequent receptor phosphorylation mediates displacement of the bound G-protein alpha subunit by arrestin and terminates signaling. The protein is Rhodopsin (rho) of Ictalurus punctatus (Channel catfish).